Here is a 134-residue protein sequence, read N- to C-terminus: Agouti-related protein (134 aa).

The first 20 residues, 1 to 20 (MLTAVLLSCALLLAMPPLQG), serve as a signal peptide directing secretion. Positions 21-84 (AQMGPAPLEG…VLDPEGRKPR (64 aa)) are excised as a propeptide. 5 disulfides stabilise this stretch: Cys89/Cys104, Cys96/Cys110, Cys103/Cys121, Cys107/Cys131, and Cys112/Cys119. In terms of domain architecture, Agouti spans 89–131 (CVRLHESCLGHQVPCCDPCATCYCRFFNAFCYCRKLGTTTNPC). The interval 113-115 (RFF) is interaction with melanocortin receptors.

In terms of assembly, interacts with melanocortin receptors MC3R, MC4R and MC5R.

It localises to the secreted. It is found in the golgi apparatus lumen. Its function is as follows. Plays a role in weight homeostasis. Involved in the control of feeding behavior through the central melanocortin system. Acts as alpha melanocyte-stimulating hormone antagonist by inhibiting cAMP production mediated by stimulation of melanocortin receptors within the hypothalamus and adrenal gland. Has very low activity with MC5R. Is an inverse agonist for MC3R and MC4R being able to suppress their constitutive activity. It promotes MC3R and MC4R endocytosis in an arrestin-dependent manner. This Bos taurus (Bovine) protein is Agouti-related protein (AGRP).